A 212-amino-acid polypeptide reads, in one-letter code: Pyridoxine/pyridoxamine 5'-phosphate oxidase (212 aa).

Substrate contacts are provided by residues 8–11 (RRSY) and K66. Residues 61–66 (RIVLLK), 76–77 (FT), R82, K83, and Q105 contribute to the FMN site. Residues Y123, R127, and S131 each coordinate substrate. FMN-binding positions include 140 to 141 (QS) and W184. Position 190–192 (190–192 (RLH)) interacts with substrate. An FMN-binding site is contributed by R194.

The protein belongs to the pyridoxamine 5'-phosphate oxidase family. Homodimer. FMN serves as cofactor.

The catalysed reaction is pyridoxamine 5'-phosphate + O2 + H2O = pyridoxal 5'-phosphate + H2O2 + NH4(+). It catalyses the reaction pyridoxine 5'-phosphate + O2 = pyridoxal 5'-phosphate + H2O2. It functions in the pathway cofactor metabolism; pyridoxal 5'-phosphate salvage; pyridoxal 5'-phosphate from pyridoxamine 5'-phosphate: step 1/1. Its pathway is cofactor metabolism; pyridoxal 5'-phosphate salvage; pyridoxal 5'-phosphate from pyridoxine 5'-phosphate: step 1/1. Catalyzes the oxidation of either pyridoxine 5'-phosphate (PNP) or pyridoxamine 5'-phosphate (PMP) into pyridoxal 5'-phosphate (PLP). The polypeptide is Pyridoxine/pyridoxamine 5'-phosphate oxidase (Cupriavidus necator (strain ATCC 17699 / DSM 428 / KCTC 22496 / NCIMB 10442 / H16 / Stanier 337) (Ralstonia eutropha)).